A 258-amino-acid polypeptide reads, in one-letter code: Thiamine thiazole synthase (258 aa).

NAD(+)-binding positions include Ser36, 55–56, Gly63, Ile127, and 153–155; these read ER and HVD. Fe cation is bound by residues Asp155 and His170. Met224 provides a ligand contact to NAD(+). Arg234 is a glycine binding site.

This sequence belongs to the THI4 family. In terms of assembly, homooctamer; tetramer of dimers. It depends on Fe(2+) as a cofactor.

It carries out the reaction hydrogen sulfide + glycine + NAD(+) = ADP-5-ethyl-4-methylthiazole-2-carboxylate + nicotinamide + 3 H2O + H(+). The protein operates within cofactor biosynthesis; thiamine diphosphate biosynthesis. Involved in the biosynthesis of the thiazole moiety of thiamine. Catalyzes the conversion of NAD and glycine to adenosine diphosphate 5-(2-hydroxyethyl)-4-methylthiazole-2-carboxylate (ADT), an adenylated thiazole intermediate, using free sulfide as a source of sulfur. The chain is Thiamine thiazole synthase from Methanothermobacter thermautotrophicus (strain ATCC 29096 / DSM 1053 / JCM 10044 / NBRC 100330 / Delta H) (Methanobacterium thermoautotrophicum).